Reading from the N-terminus, the 132-residue chain is Fatty acid-binding protein, adipocyte (132 aa).

At Cys-2 the chain carries N-acetylcysteine. The residue at position 13 (Ser-13) is a Phosphoserine. Tyr-20 bears the Phosphotyrosine; by Tyr-kinases mark. Residues 22–32 carry the Nuclear localization signal motif; the sequence is KEVGVGFATRK. Residue 127 to 129 coordinates a fatty acid; the sequence is RVY.

It belongs to the calycin superfamily. Fatty-acid binding protein (FABP) family. In terms of assembly, monomer. Homodimer. Interacts with PPARG.

It localises to the cytoplasm. It is found in the nucleus. Its function is as follows. Lipid transport protein in adipocytes. Binds both long chain fatty acids and retinoic acid. Delivers long-chain fatty acids and retinoic acid to their cognate receptors in the nucleus. The sequence is that of Fatty acid-binding protein, adipocyte (Fabp4) from Rattus norvegicus (Rat).